We begin with the raw amino-acid sequence, 708 residues long: Kin of IRRE-like protein 2 (708 aa).

The N-terminal stretch at 1–20 is a signal peptide; sequence MLRMRVPALLVLLFCFRGRA. The Extracellular segment spans residues 21 to 510; it reads GPSPHFLQQP…GRRDLLPTVR (490 aa). Ig-like C2-type domains follow at residues 24–118, 123–222, 227–307, 312–394, and 398–501; these read PHFL…AQLH, PEAP…ITLS, PEVT…TALD, PILQ…ARLT, and PPVV…ASLG. Cysteines 45 and 103 form a disulfide. A glycan (N-linked (GlcNAc...) asparagine) is linked at N143. Intrachain disulfides connect C146–C204 and C248–C291. A Cell attachment site motif is present at residues 149 to 151; the sequence is RGD. An N-linked (GlcNAc...) asparagine glycan is attached at N301. Disulfide bonds link C333–C375 and C419–C485. Residue N484 is glycosylated (N-linked (GlcNAc...) asparagine). A helical transmembrane segment spans residues 511–531; the sequence is IVAGVAAATTTLLMVITGVAL. Over 532-708 the chain is Cytoplasmic; the sequence is CCWRHSKASA…PSHPRLQTHV (177 aa). The segment at 545–601 is disordered; that stretch reads EQKNLMRIPGSSDGSSSRGPEEEETGSREDRGPIVHTDHSDLVLEEEGTLETKDPTN. Over residues 553–562 the composition is skewed to low complexity; the sequence is PGSSDGSSSR. The span at 569–586 shows a compositional bias: basic and acidic residues; it reads TGSREDRGPIVHTDHSDL. Residue S571 is modified to Phosphoserine. Phosphotyrosine is present on residues Y603, Y604, and Y661. The disordered stretch occupies residues 684 to 708; the sequence is LAPGTPPFPYAAFPTPSHPRLQTHV.

It belongs to the immunoglobulin superfamily. Homodimer. Interacts with NPHS2/podocin (via the C-terminus). Interacts with NPHS1 (via the Ig-like domains). Interacts with FYN. In terms of processing, N-glycosylated. The extracellular domain is cleaved leading to the generation of a soluble fragment and a membrane-bound C-terminal fragment, which is further cleaved by gamma-secretase. Highly expressed in beta-cells of the pancreatic islets.

It localises to the cell membrane. Functionally, may regulate basal insulin secretion. In Homo sapiens (Human), this protein is Kin of IRRE-like protein 2 (KIRREL2).